A 539-amino-acid polypeptide reads, in one-letter code: Sphingosine-1-phosphate lyase (539 aa).

A signal peptide spans 1 to 46 (MELAMDFALRLRDAANHHLSRYEPLVLLAAPLLALLAARTLHAAAA). Residues 47-54 (AVADRGLR) are Lumenal-facing. Residues 55 to 75 (TVLLALAMTAIKLLPGVSAYI) traverse the membrane as a helical segment. The Cytoplasmic segment spans residues 76-539 (NAEKRKVVDQ…LLVEFMDASC (464 aa)). Lys-344 carries the post-translational modification N6-(pyridoxal phosphate)lysine.

The protein belongs to the group II decarboxylase family. Sphingosine-1-phosphate lyase subfamily. Requires pyridoxal 5'-phosphate as cofactor.

It localises to the endoplasmic reticulum membrane. The enzyme catalyses sphinganine 1-phosphate = hexadecanal + phosphoethanolamine. Its pathway is lipid metabolism; sphingolipid metabolism. Cleaves phosphorylated sphingoid bases (PSBs), such as sphingosine-1-phosphate, into fatty aldehydes and phosphoethanolamine. Elevates stress-induced ceramide production and apoptosis. In Oryza sativa subsp. japonica (Rice), this protein is Sphingosine-1-phosphate lyase (SPL).